The following is a 148-amino-acid chain: Urease accessory protein UreE (148 aa).

The protein belongs to the UreE family.

The protein resides in the cytoplasm. Involved in urease metallocenter assembly. Binds nickel. Probably functions as a nickel donor during metallocenter assembly. The polypeptide is Urease accessory protein UreE (Lysinibacillus sphaericus (strain C3-41)).